A 969-amino-acid chain; its full sequence is Translation initiation factor IF-2 (969 aa).

Residues 50–370 form a disordered region; the sequence is SFASKSAPAN…QAPSVGGVRL (321 aa). Over residues 54-76 the composition is skewed to low complexity; it reads KSAPANGAKPGPAASARPGAKPT. Residues 77-87 show a composition bias toward pro residues; that stretch reads PGGPRPGPRTP. Residues 88–102 show a composition bias toward low complexity; the sequence is APAASAPQAPAEQTA. Residues 112–124 show a composition bias toward pro residues; the sequence is AVKPGPAPTPARP. A compositionally biased stretch (low complexity) spans 125-164; that stretch reads AAPEAPAAKAAPEAPAQRPTPGGPRPGQQQQRPGAPAQGG. Pro residues predominate over residues 240-267; it reads PGGPRPSPGSMPPRPNPGAMPQRTPRPG. Residues 269–340 are compositionally biased toward gly residues; it reads SAGGRPGRPG…GAAGAFGRPG (72 aa). The span at 344-353 shows a compositional bias: basic residues; the sequence is RRGRKSKRQK. Residues 465–636 enclose the tr-type G domain; that stretch reads VRPPVVTVMG…AVLLTADAAL (172 aa). Positions 474–481 are G1; that stretch reads GHVDHGKT. 474–481 is a GTP binding site; that stretch reads GHVDHGKT. Residues 499–503 are G2; that stretch reads GITQH. The segment at 524–527 is G3; the sequence is DTPG. Residues 524-528 and 578-581 contribute to the GTP site; these read DTPGH and NKID. The G4 stretch occupies residues 578-581; it reads NKID. Residues 614 to 616 are G5; that stretch reads SAK.

Belongs to the TRAFAC class translation factor GTPase superfamily. Classic translation factor GTPase family. IF-2 subfamily.

Its subcellular location is the cytoplasm. In terms of biological role, one of the essential components for the initiation of protein synthesis. Protects formylmethionyl-tRNA from spontaneous hydrolysis and promotes its binding to the 30S ribosomal subunits. Also involved in the hydrolysis of GTP during the formation of the 70S ribosomal complex. This is Translation initiation factor IF-2 from Nocardia farcinica (strain IFM 10152).